A 663-amino-acid polypeptide reads, in one-letter code: Fructose-1,6-bisphosphatase class 3 1 (663 aa).

Belongs to the FBPase class 3 family. Mn(2+) serves as cofactor.

The catalysed reaction is beta-D-fructose 1,6-bisphosphate + H2O = beta-D-fructose 6-phosphate + phosphate. It participates in carbohydrate biosynthesis; gluconeogenesis. The chain is Fructose-1,6-bisphosphatase class 3 1 from Clostridium beijerinckii (strain ATCC 51743 / NCIMB 8052) (Clostridium acetobutylicum).